The chain runs to 424 residues: MGHTITEKIIADHAGKKEVFPGELVTAKIDLAMANDVTAPLSIKTLEKYGIEKVFDKDKIALVLSHFVPAKDIKSAEQAKIVRDFAKKHNIKWFFGEGEGIEHTLLPENGIVVPGDLVVGADSHTCTYGGIGAFSTGVGSTDLAYAMATGEIWLKVPESMKFIFYGKLNKWVSGKDLILYTIGQIGVDGALYRAMEFDGEAIRSLDVSQRLTIANMAIEAGGKSGIISPDEKTIEYVEKRAKKPYKIYQSDKDAHYVEVYEWDASSIEPMVAWPYLPSNVHPVSESTHITIDQAFIGSCTNGRIEDLRIAASILKGKKVHPYTRCVVIPASKNVYLQALHEGLVDIFIEAGCAVSTSTCGPCLGGHMGILAKGERCISTSNRNFPGRMGHPQSEAYLANPAVVAASAVLGRIAHPEEVASEVLV.

Positions 299, 359, and 362 each coordinate [4Fe-4S] cluster.

It belongs to the aconitase/IPM isomerase family. LeuC type 2 subfamily. Heterodimer of LeuC and LeuD. The cofactor is [4Fe-4S] cluster.

The catalysed reaction is (2R,3S)-3-isopropylmalate = (2S)-2-isopropylmalate. It functions in the pathway amino-acid biosynthesis; L-leucine biosynthesis; L-leucine from 3-methyl-2-oxobutanoate: step 2/4. Its function is as follows. Catalyzes the isomerization between 2-isopropylmalate and 3-isopropylmalate, via the formation of 2-isopropylmaleate. The polypeptide is 3-isopropylmalate dehydratase large subunit (Hydrogenobaculum sp. (strain Y04AAS1)).